We begin with the raw amino-acid sequence, 220 residues long: Deoxyribose-phosphate aldolase (220 aa).

The Proton donor/acceptor role is filled by Asp89. The Schiff-base intermediate with acetaldehyde role is filled by Lys151. Lys180 (proton donor/acceptor) is an active-site residue.

The protein belongs to the DeoC/FbaB aldolase family. DeoC type 1 subfamily.

It is found in the cytoplasm. It catalyses the reaction 2-deoxy-D-ribose 5-phosphate = D-glyceraldehyde 3-phosphate + acetaldehyde. The protein operates within carbohydrate degradation; 2-deoxy-D-ribose 1-phosphate degradation; D-glyceraldehyde 3-phosphate and acetaldehyde from 2-deoxy-alpha-D-ribose 1-phosphate: step 2/2. Its function is as follows. Catalyzes a reversible aldol reaction between acetaldehyde and D-glyceraldehyde 3-phosphate to generate 2-deoxy-D-ribose 5-phosphate. This is Deoxyribose-phosphate aldolase from Mycoplasmopsis pulmonis (strain UAB CTIP) (Mycoplasma pulmonis).